The chain runs to 346 residues: Flap endonuclease 1 (346 aa).

Residues 1 to 102 (MGVTELGKLI…LEIEQRKKAK (102 aa)) form an N-domain region. Asp31, Asp84, Glu156, Glu158, Asp177, Asp179, and Asp239 together coordinate Mg(2+). The segment at 120–261 (DVAKYAKRAI…KALKLIWEFG (142 aa)) is I-domain.

The protein belongs to the XPG/RAD2 endonuclease family. FEN1 subfamily. Interacts with PCNA. PCNA stimulates the nuclease activity without altering cleavage specificity. Mg(2+) serves as cofactor.

Functionally, structure-specific nuclease with 5'-flap endonuclease and 5'-3' exonuclease activities involved in DNA replication and repair. During DNA replication, cleaves the 5'-overhanging flap structure that is generated by displacement synthesis when DNA polymerase encounters the 5'-end of a downstream Okazaki fragment. Binds the unpaired 3'-DNA end and kinks the DNA to facilitate 5' cleavage specificity. Cleaves one nucleotide into the double-stranded DNA from the junction in flap DNA, leaving a nick for ligation. Also involved in the base excision repair (BER) pathway. Acts as a genome stabilization factor that prevents flaps from equilibrating into structures that lead to duplications and deletions. Also possesses 5'-3' exonuclease activity on nicked or gapped double-stranded DNA. The chain is Flap endonuclease 1 from Pyrobaculum calidifontis (strain DSM 21063 / JCM 11548 / VA1).